We begin with the raw amino-acid sequence, 235 residues long: 7-cyano-7-deazaguanine synthase (235 aa).

Residue 13-23 participates in ATP binding; the sequence is FSGGLDSTTCL. The Zn(2+) site is built by Cys-197, Cys-207, Cys-210, and Cys-213.

The protein belongs to the QueC family. Zn(2+) is required as a cofactor.

It carries out the reaction 7-carboxy-7-deazaguanine + NH4(+) + ATP = 7-cyano-7-deazaguanine + ADP + phosphate + H2O + H(+). Its pathway is purine metabolism; 7-cyano-7-deazaguanine biosynthesis. Catalyzes the ATP-dependent conversion of 7-carboxy-7-deazaguanine (CDG) to 7-cyano-7-deazaguanine (preQ(0)). The chain is 7-cyano-7-deazaguanine synthase from Solidesulfovibrio magneticus (strain ATCC 700980 / DSM 13731 / RS-1) (Desulfovibrio magneticus).